The chain runs to 307 residues: 2,4-diacetylphloroglucinol hydrolase (307 aa).

Residues His-142, Glu-173, His-283, and Glu-287 each contribute to the Zn(2+) site.

It belongs to the DAPG/phloretin hydrolase family. Zn(2+) serves as cofactor.

The enzyme catalyses 2,4-diacetylphloroglucinol + H2O = 2-acetylphloroglucinol + acetate. Its activity is regulated as follows. Activity is strongly reduced by pyoluteorin, an antifungal compound produced by the bacterium. Functionally, hydrolase that specifically degrades the potent antimicrobial compound 2,4-diacetylphloroglucinol (DAPG) to equimolar amounts of mildly toxic monoacetylphloroglucinol (MAPG) and acetate. Does not degrade other compounds with structures similar to DAPG, such as MAPG and triacetylphloroglucinol, suggesting strict substrate specificity. Degradation of DAPG to MAPG may provide an additional means of fine-tuning levels of this antibiotic or may help avoid accumulation of a metabolite that at high levels may become toxic to the producing bacterium. The polypeptide is 2,4-diacetylphloroglucinol hydrolase (Pseudomonas protegens (strain DSM 19095 / LMG 27888 / CFBP 6595 / CHA0)).